A 445-amino-acid polypeptide reads, in one-letter code: F-box protein At5g10340 (445 aa).

The region spanning 64–112 is the F-box domain; that stretch reads SMEELLPHDVIEYHIMVRLDVKTLLKFKSVSKQWMSTIQSPSFQERQLI.

In Arabidopsis thaliana (Mouse-ear cress), this protein is F-box protein At5g10340.